A 182-amino-acid polypeptide reads, in one-letter code: Large ribosomal subunit protein uL16 (182 aa).

It belongs to the universal ribosomal protein uL16 family.

The chain is Large ribosomal subunit protein uL16 from Thermococcus onnurineus (strain NA1).